Consider the following 228-residue polypeptide: 2,3-bisphosphoglycerate-dependent phosphoglycerate mutase (228 aa).

Substrate contacts are provided by residues 8 to 15 (RHGQSQWN), 21 to 22 (TG), Arg-60, 87 to 90 (ERHY), Lys-98, 114 to 115 (RR), and 180 to 181 (GN). The Tele-phosphohistidine intermediate role is filled by His-9. Catalysis depends on Glu-87, which acts as the Proton donor/acceptor.

The protein belongs to the phosphoglycerate mutase family. BPG-dependent PGAM subfamily. In terms of assembly, homodimer.

It carries out the reaction (2R)-2-phosphoglycerate = (2R)-3-phosphoglycerate. It participates in carbohydrate degradation; glycolysis; pyruvate from D-glyceraldehyde 3-phosphate: step 3/5. Its function is as follows. Catalyzes the interconversion of 2-phosphoglycerate and 3-phosphoglycerate. The polypeptide is 2,3-bisphosphoglycerate-dependent phosphoglycerate mutase (Sphingopyxis alaskensis (strain DSM 13593 / LMG 18877 / RB2256) (Sphingomonas alaskensis)).